Consider the following 396-residue polypeptide: MAEKEHYERTKPHVNIGTIGHVDHGKTTLTAAITTVLAEDGLAQAEDYSQIDAAPEEKERGITINTAHVEYETKNRHYAHMDAPGHADYIKNMITGAAQMDGAILVVAATDGPMPQTREHILLARQVGVQYIVVFLNKVDLVDDPELIDLVEMEVRDLLSEYDYPGDDVPVIRGSALKALEGDPEQQDVIRKLMETVDEYIPTPERDTDKPFLMPVEDVFTITGRGTVASGRIDRGTVKVGDEVEIVGLTDKIEKSTVTGLEMFHKTLDLGEAGDNVGVLLRGIDRDQVERGQVLAAPGSIQTHKNFKGQVYILNKDEGGRHTPFFSDYRPQFYFHTTDVTGKIELPEGTEMVMPGDNVEFTVELIKPVAIEKGTKFTIREGGKTVGAGQVTEILD.

The region spanning 11–205 (KPHVNIGTIG…TVDEYIPTPE (195 aa)) is the tr-type G domain. The G1 stretch occupies residues 20–27 (GHVDHGKT). Residue 20-27 (GHVDHGKT) coordinates GTP. T27 contacts Mg(2+). A G2 region spans residues 61 to 65 (GITIN). The interval 82–85 (DAPG) is G3. GTP-binding positions include 82–86 (DAPGH) and 137–140 (NKVD). The tract at residues 137–140 (NKVD) is G4. The segment at 175–177 (SAL) is G5.

It belongs to the TRAFAC class translation factor GTPase superfamily. Classic translation factor GTPase family. EF-Tu/EF-1A subfamily. In terms of assembly, monomer.

It is found in the cytoplasm. The catalysed reaction is GTP + H2O = GDP + phosphate + H(+). Functionally, GTP hydrolase that promotes the GTP-dependent binding of aminoacyl-tRNA to the A-site of ribosomes during protein biosynthesis. The polypeptide is Elongation factor Tu (Lactobacillus johnsonii (strain CNCM I-12250 / La1 / NCC 533)).